Here is a 239-residue protein sequence, read N- to C-terminus: Protein Thf1 (239 aa).

A coiled-coil region spans residues 183–221; sequence ERVRKDLELYRSSLDRMKQARAVVEEMVKAARRQQERRQ. Residues 211–221 show a composition bias toward basic and acidic residues; the sequence is KAARRQQERRQ. The disordered stretch occupies residues 211 to 239; sequence KAARRQQERRQSAASLPETSLGDPSKPGS.

It belongs to the THF1 family.

Its function is as follows. May be involved in photosynthetic membrane biogenesis. The chain is Protein Thf1 from Synechococcus sp. (strain JA-2-3B'a(2-13)) (Cyanobacteria bacterium Yellowstone B-Prime).